A 650-amino-acid chain; its full sequence is Acetyl-coenzyme A synthetase (650 aa).

CoA is bound by residues 191–194, T311, and N335; that span reads RAGR. ATP is bound by residues 387 to 389, 411 to 416, D500, and R515; these read GEP and DTWWQT. S523 contributes to the CoA binding site. Residue R526 coordinates ATP. V537, H539, and V542 together coordinate Mg(2+). Residue R584 participates in CoA binding. K609 bears the N6-acetyllysine mark.

Belongs to the ATP-dependent AMP-binding enzyme family. It depends on Mg(2+) as a cofactor. Acetylated. Deacetylation by the SIR2-homolog deacetylase activates the enzyme.

It carries out the reaction acetate + ATP + CoA = acetyl-CoA + AMP + diphosphate. Catalyzes the conversion of acetate into acetyl-CoA (AcCoA), an essential intermediate at the junction of anabolic and catabolic pathways. AcsA undergoes a two-step reaction. In the first half reaction, AcsA combines acetate with ATP to form acetyl-adenylate (AcAMP) intermediate. In the second half reaction, it can then transfer the acetyl group from AcAMP to the sulfhydryl group of CoA, forming the product AcCoA. In Shewanella pealeana (strain ATCC 700345 / ANG-SQ1), this protein is Acetyl-coenzyme A synthetase.